Reading from the N-terminus, the 224-residue chain is Non-structural protein V (224 aa).

Residues 54–65 (QKNIQHPTASHQ) are compositionally biased toward polar residues. Disordered stretches follow at residues 54-94 (QKNI…TQIP) and 150-172 (TEFK…GHRR). Positions 170, 189, 193, 205, 207, 210, 214, and 217 each coordinate Zn(2+).

The protein belongs to the paramyxoviruses V protein family. In terms of assembly, interacts with host IFIH1/MDA5 and DHX58/LGP2. Forms with host DDB1, CUL4A, STAT1, STAT2 and STAT3 the mumps virus V-dependent complex (VDC).

Its subcellular location is the virion. The protein localises to the host cytoplasm. In terms of biological role, plays an essential role in the inhibition of host immune response. Prevents the establishment of cellular antiviral state by blocking interferon-alpha/beta (IFN-alpha/beta) production and signaling pathway. Interacts with host IFIH1/MDA5 and DHX58/LGP2 to inhibit the transduction pathway involved in the activation of IFN-beta promoter, thus protecting the virus against cell antiviral state. Blocks the type I and II interferon signaling pathways by interacting with host STAT1, STAT2 and STAT3, and mediating their ubiquitination and subsequent proteasomal degradation. The sequence is that of Non-structural protein V from Homo sapiens (Human).